Consider the following 281-residue polypeptide: uncharacterized protein (281 aa).

This is an uncharacterized protein from Acanthamoeba polyphaga (Amoeba).